A 291-amino-acid chain; its full sequence is Deaminated glutathione amidase (291 aa).

Positions 13-268 constitute a CN hydrolase domain; the sequence is KRIGLGQITS…NDIAFVDIDL (256 aa). Glutamate 52 serves as the catalytic Proton acceptor. Catalysis depends on lysine 130, which acts as the Proton donor. Cysteine 172 functions as the Nucleophile in the catalytic mechanism.

It belongs to the carbon-nitrogen hydrolase superfamily. NIT1/NIT2 family.

It carries out the reaction N-(4-oxoglutaryl)-L-cysteinylglycine + H2O = L-cysteinylglycine + 2-oxoglutarate. Its function is as follows. Catalyzes the hydrolysis of the amide bond in N-(4-oxoglutarate)-L-cysteinylglycine (deaminated glutathione), a metabolite repair reaction to dispose of the harmful deaminated glutathione. The sequence is that of Deaminated glutathione amidase (nit1-1) from Dictyostelium discoideum (Social amoeba).